A 400-amino-acid polypeptide reads, in one-letter code: Cytohesin-3 (400 aa).

Residues 14 to 61 (EDLSLEEREELLDIRRRKKELIDDIERLKYEIAEVMTEIDNLTSVEES) are a coiled coil. Positions 77–206 (FNMDPKKGIQ…IIMLNTSLHN (130 aa)) constitute an SEC7 domain. One can recognise a PH domain in the interval 265 to 381 (PDREGWLLKL…WMKSIKASIS (117 aa)). A 1,2-diacyl-sn-glycero-3-phospho-(1D-myo-inositol-3,4,5-trisphosphate) is bound by residues 273–281 (KLGGGRVKT), Arg-285, Tyr-296, Arg-306, and Asn-355. The segment at 392–400 (RKRRIANKK) is C-terminal autoinhibitory region.

Interacts with TAMALIN. Present in all tissues tested, with highest protein levels in brain and adrenal.

The protein resides in the cytoplasm. Its subcellular location is the cytosol. It localises to the cell membrane. In terms of biological role, promotes guanine-nucleotide exchange on ARF1. Promotes the activation of ARF factors through replacement of GDP with GTP. The sequence is that of Cytohesin-3 (Cyth3) from Rattus norvegicus (Rat).